The following is a 260-amino-acid chain: NH(3)-dependent NAD(+) synthetase (260 aa).

Glycine 31–serine 38 lines the ATP pocket. Residue aspartate 37 coordinates Mg(2+). Arginine 112 is a deamido-NAD(+) binding site. Residue threonine 132 participates in ATP binding. Glutamate 137 provides a ligand contact to Mg(2+). ATP is bound by residues lysine 161 and serine 183.

It belongs to the NAD synthetase family. As to quaternary structure, homodimer.

The enzyme catalyses deamido-NAD(+) + NH4(+) + ATP = AMP + diphosphate + NAD(+) + H(+). Its pathway is cofactor biosynthesis; NAD(+) biosynthesis; NAD(+) from deamido-NAD(+) (ammonia route): step 1/1. Catalyzes the ATP-dependent amidation of deamido-NAD to form NAD. Uses ammonia as a nitrogen source. This Helicobacter pylori (strain ATCC 700392 / 26695) (Campylobacter pylori) protein is NH(3)-dependent NAD(+) synthetase.